A 310-amino-acid chain; its full sequence is tRNA uridine(34) hydroxylase (310 aa).

Positions 123–217 (ADPDVVVIDV…YLEKVPEDES (95 aa)) constitute a Rhodanese domain. The Cysteine persulfide intermediate role is filled by C177.

The protein belongs to the TrhO family.

The catalysed reaction is uridine(34) in tRNA + AH2 + O2 = 5-hydroxyuridine(34) in tRNA + A + H2O. Its function is as follows. Catalyzes oxygen-dependent 5-hydroxyuridine (ho5U) modification at position 34 in tRNAs. This Acaryochloris marina (strain MBIC 11017) protein is tRNA uridine(34) hydroxylase.